Here is a 69-residue protein sequence, read N- to C-terminus: Ribosome modulation factor (69 aa).

The protein belongs to the ribosome modulation factor family.

The protein resides in the cytoplasm. Its function is as follows. During stationary phase, converts 70S ribosomes to an inactive dimeric form (100S ribosomes). This chain is Ribosome modulation factor, found in Hahella chejuensis (strain KCTC 2396).